We begin with the raw amino-acid sequence, 880 residues long: Nonsense-mediated mRNA decay factor SMG7-like (880 aa).

TPR repeat units follow at residues 149 to 183 and 184 to 217; these read QEQY…NPHN and QLAV…GASN. The tract at residues 669 to 711 is disordered; the sequence is RLGLSKPNGLGPIDETGPVSAFDSLSINSSTEHPASSYSPPTP. Over residues 691–701 the composition is skewed to polar residues; that stretch reads DSLSINSSTEH.

May play a role in growth and development. The chain is Nonsense-mediated mRNA decay factor SMG7-like from Arabidopsis thaliana (Mouse-ear cress).